The chain runs to 128 residues: 2-iminobutanoate/2-iminopropanoate deaminase (128 aa).

Residue Arg105 participates in substrate binding.

It belongs to the RutC family. Homotrimer.

It localises to the cytoplasm. The catalysed reaction is 2-iminobutanoate + H2O = 2-oxobutanoate + NH4(+). The enzyme catalyses 2-iminopropanoate + H2O = pyruvate + NH4(+). Its pathway is amino-acid biosynthesis; L-isoleucine biosynthesis; 2-oxobutanoate from L-threonine. Functionally, accelerates the release of ammonia from reactive enamine/imine intermediates of the PLP-dependent threonine dehydratase (IlvA) in the low water environment of the cell. It catalyzes the deamination of enamine/imine intermediates to yield 2-ketobutyrate and ammonia. It is required for the detoxification of reactive intermediates of IlvA due to their highly nucleophilic abilities and to avoid they are captured by anthranilate phosphoribosyltransferase (TrpD) to generate PRA, an intermediate in the alternative pyrimidine biosynthetic (APB) pathway. Also required for full activity of IlvE which is involved in the isoleucine biosynthesis. RidA also accelerates the release of pyruvate produced by IlvA from L-serine. This Salmonella typhimurium (strain LT2 / SGSC1412 / ATCC 700720) protein is 2-iminobutanoate/2-iminopropanoate deaminase.